The primary structure comprises 6753 residues: Putative histone-lysine N-methyltransferase 1 (6753 aa).

6 disordered regions span residues 1-28 (MSEN…CKKE), 418-458 (FGNM…GKKN), 470-522 (DTTL…CNPS), 736-1024 (DDDE…KKDK), 1487-1545 (FNNN…NTAT), and 1557-1642 (YKKV…GKSK). The segment covering 435–449 (NNTSKNNISNNNNNM) has biased composition (low complexity). Basic and acidic residues predominate over residues 475–502 (QAKKESIKTVSKNERKNNMNKHSHDNKV). Residues 504–516 (KLNKRMSNKRRNN) show a composition bias toward basic residues. Over residues 739–794 (ECKKENKDNISESSKRSNNIGEKKMLHVEKSEEHDDMTSDSNKEDTKIEEGRKKSN) the composition is skewed to basic and acidic residues. The span at 798 to 808 (IDVDDGEEEEN) shows a compositional bias: acidic residues. A compositionally biased stretch (low complexity) spans 809–833 (VNNNDNNNDNNNDNDNSSDNNNNDD). Basic and acidic residues-rich tracts occupy residues 853–866 (EKKD…DKNL) and 885–900 (IKKD…KKNI). The segment covering 912-932 (RSNSSSTSTSNSSSKSKSSNC) has biased composition (low complexity). Basic and acidic residues-rich tracts occupy residues 945–955 (KMDEKNSEQKK) and 964–975 (TCNEGKSKKDST). 2 stretches are compositionally biased toward basic residues: residues 1002-1019 (EKKK…RKGI) and 1492-1506 (KNKR…KNTI). The span at 1522 to 1533 (SNSHSIEVSSSE) shows a compositional bias: low complexity. Positions 1566 to 1599 (KNGENKNGENKNGDIKNDDIKNDDIKNDDIRNDD) are enriched in basic and acidic residues. Residues 1615 to 1632 (ESNNIDNNNSSNDSLSDV) show a composition bias toward low complexity. 3 PHD-type zinc fingers span residues 1671 to 1728 (CYRC…CLKC), 1761 to 1819 (KNFC…CSIG), and 2510 to 2579 (KECC…CIKC). The RING-type; degenerate zinc finger occupies 1764-1817 (CIMCNEKYDEDDSKKWVQCDVCKFWIHLSCDKNESRNIETLSNKNIDYKCPTCS). A Bromo domain is found at 1816–1919 (CSIGTFHDKI…KKGRVIIKNM (104 aa)). Over residues 2694–2705 (ECNKNEKKKNDN) the composition is skewed to basic and acidic residues. Disordered stretches follow at residues 2694 to 2768 (ECNK…KDTK), 3053 to 3072 (EMES…CNNN), 4182 to 4254 (NEQN…LKTT), 4295 to 4349 (ENDE…ENEK), and 5331 to 5460 (NMNM…NNDK). A compositionally biased stretch (low complexity) spans 2720 to 2735 (NNNNNNNGDDNNNIDN). Residues 2758–2768 (NEEKKNNKDTK) show a composition bias toward basic and acidic residues. Low complexity predominate over residues 3057–3072 (NNNNNNNNNNSDCNNN). Composition is skewed to basic and acidic residues over residues 4212-4223 (SKKDMLIKKEMN), 4239-4254 (SPKK…LKTT), and 4297-4321 (DENK…EKKK). Positions 4322-4338 (KENKKGREKSVKVRKTK) are enriched in basic residues. Low complexity-rich tracts occupy residues 5331–5340 (NMNMLDNNMN) and 5348–5400 (ENNN…NNNN). Positions 5401–5411 (KSKKNTQKKKD) are enriched in basic residues. Over residues 5416–5426 (VKINQNNSNNK) the composition is skewed to low complexity. The segment covering 5434–5460 (SKDNEELKSDNTKNNKTKDSDGNNNDK) has biased composition (basic and acidic residues). The segment at 5496–5532 (YMKEKKCKNKEKNRGSKNNNIKNIKLIDMCEWKEDRN) adopts a C2HC pre-PHD-type; degenerate zinc-finger fold. A PHD-type 4; degenerate zinc finger spans residues 5558-5610 (STCFLCGYNNASVYCSNEDCNVKFHLNCAFYSTVIKDPSNNPFFRYLKCFNLV). Residues 5905–5952 (NDNNNDINNNDNNNNENNNENINDNNNNNNNNNNNNNNNNSNNNNNNN) show a composition bias toward low complexity. Disordered regions lie at residues 5905-5958 (NDNN…YYHN), 6103-6133 (DCSN…PEHI), and 6212-6235 (KFSD…KNQT). Basic and acidic residues predominate over residues 6118–6133 (ENRKNENDDDNIPEHI). The region spanning 6612–6729 (LRLYVKKSSI…AHEEITYDYQ (118 aa)) is the SET domain. One can recognise a Post-SET domain in the interval 6737 to 6753 (KKLICLCGSSTCLGRMN).

Belongs to the class V-like SAM-binding methyltransferase superfamily.

It catalyses the reaction L-lysyl-[histone] + S-adenosyl-L-methionine = N(6)-methyl-L-lysyl-[histone] + S-adenosyl-L-homocysteine + H(+). Probable histone methyltransferase. This chain is Putative histone-lysine N-methyltransferase 1 (SET1), found in Plasmodium falciparum (isolate 3D7).